The chain runs to 89 residues: uncharacterized protein (89 aa).

2 stretches are compositionally biased toward basic residues: residues 1–17 (MPPHGHHHHHHGHHGHH) and 65–89 (HHGHHHHHGHHGHHDHHHHGHHGHH). Disordered stretches follow at residues 1–25 (MPPHGHHHHHHGHHGHHEHITITPV) and 60–89 (LETGHHHGHHHHHGHHGHHDHHHHGHHGHH).

This is an uncharacterized protein from Dictyostelium discoideum (Social amoeba).